The primary structure comprises 249 residues: MAAGMYLEHYLDSIENLPFELQRNFQLMRDLDQRTEDLKSEIDKLATEYISNARTLSSEEKLGLLKQIQEAYGKCKEFGDDKVQLAMQTYEMVDKHIRRLDTDLARFEADLKEKQIESSDYDSSSSKGKKKGRAQKEKKAARARSKGKNSDEEAPKTAQKKLKLVRTSTEYGMPSVTFGNVHPSDVLDMPVDPNEPTYCLCHQVSYGEMIGCDNPDCSIEWFHFACVGLTTKPRGKWFCPRCSQERKKK.

Residues phenylalanine 25–serine 118 adopt a coiled-coil conformation. The interval glutamine 115 to lysine 160 is disordered. A PHD-type zinc finger spans residues proline 196 to glutamate 245. Zn(2+) contacts are provided by cysteine 199, cysteine 201, cysteine 212, cysteine 217, histidine 223, cysteine 226, cysteine 239, and cysteine 242.

Belongs to the ING family. Homodimer. Component of the HBO1 complex.

It localises to the nucleus. Functionally, component of HBO1 complexes, which specifically mediate acetylation of histone H3 at 'Lys-14' (H3K14ac), and have reduced activity toward histone H4. Through chromatin acetylation it may function in DNA replication. The chain is Inhibitor of growth protein 4 (ING4) from Gallus gallus (Chicken).